The primary structure comprises 297 residues: Bifunctional protein FolD (297 aa).

NADP(+) contacts are provided by residues 168–170, threonine 195, and valine 236; that span reads GRG.

Belongs to the tetrahydrofolate dehydrogenase/cyclohydrolase family. Homodimer.

It catalyses the reaction (6R)-5,10-methylene-5,6,7,8-tetrahydrofolate + NADP(+) = (6R)-5,10-methenyltetrahydrofolate + NADPH. It carries out the reaction (6R)-5,10-methenyltetrahydrofolate + H2O = (6R)-10-formyltetrahydrofolate + H(+). The protein operates within one-carbon metabolism; tetrahydrofolate interconversion. Catalyzes the oxidation of 5,10-methylenetetrahydrofolate to 5,10-methenyltetrahydrofolate and then the hydrolysis of 5,10-methenyltetrahydrofolate to 10-formyltetrahydrofolate. The polypeptide is Bifunctional protein FolD (Bifidobacterium animalis subsp. lactis (strain AD011)).